The primary structure comprises 365 residues: TD and POZ domain-containing protein 1-like (365 aa).

In terms of domain architecture, MATH spans 19–149; sequence KFCYKWTISN…EDQLTICCKV (131 aa). A BTB domain is found at 188–255; it reads TDCCLLVAGH…IYTGKAPYLH (68 aa).

The protein belongs to the Tdpoz family.

This chain is TD and POZ domain-containing protein 1-like, found in Mus musculus (Mouse).